The chain runs to 441 residues: Probable cyclic di-GMP phosphodiesterase VC_1348 (441 aa).

The region spanning 72-187 is the Response regulatory domain; the sequence is TILIVDDSPD…LLKSRVHTHL (116 aa). Residue aspartate 120 is modified to 4-aspartylphosphate. The HD-GYP domain maps to 214–425; the sequence is LDRMQDAVVF…FIDIAQKFAD (212 aa).

It carries out the reaction 3',3'-c-di-GMP + 2 H2O = 2 GMP + 2 H(+). Probable phosphodiesterase (PDE) that catalyzes the hydrolysis of cyclic diguanylate (c-di-GMP). Increases motility and decreases biofilm formation in vivo. The protein is Probable cyclic di-GMP phosphodiesterase VC_1348 of Vibrio cholerae serotype O1 (strain ATCC 39315 / El Tor Inaba N16961).